Consider the following 443-residue polypeptide: Xaa-Pro dipeptidase (443 aa).

Residues aspartate 246, aspartate 257, histidine 339, glutamate 384, and glutamate 423 each coordinate Mn(2+).

The protein belongs to the peptidase M24B family. Bacterial-type prolidase subfamily. Mn(2+) is required as a cofactor.

It carries out the reaction Xaa-L-Pro dipeptide + H2O = an L-alpha-amino acid + L-proline. Splits dipeptides with a prolyl residue in the C-terminal position. This Serratia proteamaculans (strain 568) protein is Xaa-Pro dipeptidase.